We begin with the raw amino-acid sequence, 91 residues long: RNA-binding protein Hfq (91 aa).

The region spanning 9-69 is the Sm domain; sequence DRFLNMLRTG…ISTIMPSSFV (61 aa).

The protein belongs to the Hfq family. As to quaternary structure, homohexamer.

RNA chaperone that binds small regulatory RNA (sRNAs) and mRNAs to facilitate mRNA translational regulation in response to envelope stress, environmental stress and changes in metabolite concentrations. Also binds with high specificity to tRNAs. The sequence is that of RNA-binding protein Hfq from Pseudothermotoga lettingae (strain ATCC BAA-301 / DSM 14385 / NBRC 107922 / TMO) (Thermotoga lettingae).